Reading from the N-terminus, the 429-residue chain is Alpha-galactosidase A (429 aa).

Positions 1–31 are cleaved as a signal peptide; that stretch reads MQLRNPELHLGCALALRFLALVSWDIPGARA. 2 disulfides stabilise this stretch: Cys52-Cys94 and Cys56-Cys63. A glycan (N-linked (GlcNAc...) asparagine) is linked at Asn139. Cys142 and Cys172 are oxidised to a cystine. Catalysis depends on Asp170, which acts as the Nucleophile. Residue Asn192 is glycosylated (N-linked (GlcNAc...) asparagine). Cys202 and Cys223 are joined by a disulfide. Substrate is bound at residue 203 to 207; that stretch reads EWPLY. The N-linked (GlcNAc...) asparagine glycan is linked to Asn215. Catalysis depends on Asp231, which acts as the Proton donor. Cysteines 378 and 382 form a disulfide.

Belongs to the glycosyl hydrolase 27 family. In terms of assembly, homodimer.

It is found in the lysosome. It catalyses the reaction Hydrolysis of terminal, non-reducing alpha-D-galactose residues in alpha-D-galactosides, including galactose oligosaccharides, galactomannans and galactolipids.. It carries out the reaction a globoside Gb3Cer (d18:1(4E)) + H2O = a beta-D-Gal-(1-&gt;4)-beta-D-Glc-(1&lt;-&gt;1)-Cer(d18:1(4E)) + D-galactose. The catalysed reaction is a globoside Gb3Cer + H2O = a beta-D-galactosyl-(1-&gt;4)-beta-D-glucosyl-(1&lt;-&gt;1)-ceramide + D-galactose. With respect to regulation, galactosylgalactosylglucosylceramidase activity is stimulated by saposin B and ammonium chloride. Its function is as follows. Catalyzes the hydrolysis of glycosphingolipids and participates in their degradation in the lysosome. The polypeptide is Alpha-galactosidase A (Homo sapiens (Human)).